Here is a 333-residue protein sequence, read N- to C-terminus: L-lactate dehydrogenase A chain (333 aa).

NAD(+) contacts are provided by residues 30 to 58 (GAVG…IEDK) and Arg100. Substrate-binding residues include Arg107, Asn139, and Arg170. Asn139 contacts NAD(+). The Proton acceptor role is filled by His194. Thr249 contacts substrate.

It belongs to the LDH/MDH superfamily. LDH family. Homotetramer.

It is found in the cytoplasm. It catalyses the reaction (S)-lactate + NAD(+) = pyruvate + NADH + H(+). Its pathway is fermentation; pyruvate fermentation to lactate; (S)-lactate from pyruvate: step 1/1. Interconverts simultaneously and stereospecifically pyruvate and lactate with concomitant interconversion of NADH and NAD(+). In Ambystoma mexicanum (Axolotl), this protein is L-lactate dehydrogenase A chain (LDHA).